We begin with the raw amino-acid sequence, 189 residues long: Putative nucleotidase BC_3386 (189 aa).

It belongs to the 5'(3')-deoxyribonucleotidase family.

This is Putative nucleotidase BC_3386 from Bacillus cereus (strain ATCC 14579 / DSM 31 / CCUG 7414 / JCM 2152 / NBRC 15305 / NCIMB 9373 / NCTC 2599 / NRRL B-3711).